We begin with the raw amino-acid sequence, 119 residues long: Large ribosomal subunit protein bL19 (119 aa).

This sequence belongs to the bacterial ribosomal protein bL19 family.

Its function is as follows. This protein is located at the 30S-50S ribosomal subunit interface and may play a role in the structure and function of the aminoacyl-tRNA binding site. The polypeptide is Large ribosomal subunit protein bL19 (Limosilactobacillus fermentum (strain NBRC 3956 / LMG 18251) (Lactobacillus fermentum)).